Reading from the N-terminus, the 709-residue chain is Tyrosine-protein phosphatase cdc-14 (709 aa).

The Tyrosine-protein phosphatase domain maps to 196-354 (DFNWIIPGKI…QKFCWSLSQS (159 aa)). Cys-295 serves as the catalytic Phosphocysteine intermediate. The Nuclear localization signal signature appears at 366–371 (KRNVRR). The Nuclear export signal signature appears at 372-381 (LVNQVDDINL). Disordered stretches follow at residues 403 to 541 (VQVQ…LTRT), 573 to 594 (RYLS…GTSP), and 628 to 661 (ESKP…PYPS). The span at 404–413 (QVQNGRSTAP) shows a compositional bias: polar residues. A compositionally biased stretch (low complexity) spans 463 to 479 (TTSPNSSSSRRFVKSST). 2 stretches are compositionally biased toward polar residues: residues 480 to 490 (PQMTVPSQAYL) and 501 to 521 (PSKN…TPNG). A compositionally biased stretch (low complexity) spans 526-541 (RTRNSSGNTTSTLTRT). Polar residues predominate over residues 639-649 (PGTSKSTSSLK).

This sequence belongs to the protein-tyrosine phosphatase family. Non-receptor class CDC14 subfamily.

The protein localises to the cytoplasm. It is found in the cytoskeleton. Its subcellular location is the microtubule organizing center. It localises to the centrosome. The protein resides in the spindle. The protein localises to the midbody. It is found in the nucleus. The enzyme catalyses O-phospho-L-tyrosyl-[protein] + H2O = L-tyrosyl-[protein] + phosphate. Its activity is regulated as follows. Inhibited by sodium orthovanadate. Weakly inhibited by sodium fluoride and okadaic acid. Its function is as follows. Protein phosphatase that negatively regulates the G1-to-S phase transition to inhibit the cell cycle and establish quiescence in cells of multiple lineages including vulval, hypodermal and intestinal. Promotes nuclear accumulation and activity of the cyclin-dependent kinase inhibitor cki-1 which leads to inhibition of G1 progression during vulval tissue development. Has been shown to not be required for cytokinesis. However, in the embryo, in a contrasting study, has been shown to act as a regulator of central spindle formation and cytokinesis, and may be required for localization of the spindle component zen-4, and its interacting partner air-2 at the spindle during late cell divisions. Functionally, main regulator of cell cycle arrest in vulval precursor cells. The protein is Tyrosine-protein phosphatase cdc-14 of Caenorhabditis elegans.